A 195-amino-acid chain; its full sequence is 3-isopropylmalate dehydratase small subunit (195 aa).

Belongs to the LeuD family. LeuD type 1 subfamily. As to quaternary structure, heterodimer of LeuC and LeuD.

The catalysed reaction is (2R,3S)-3-isopropylmalate = (2S)-2-isopropylmalate. It functions in the pathway amino-acid biosynthesis; L-leucine biosynthesis; L-leucine from 3-methyl-2-oxobutanoate: step 2/4. Its function is as follows. Catalyzes the isomerization between 2-isopropylmalate and 3-isopropylmalate, via the formation of 2-isopropylmaleate. This Koribacter versatilis (strain Ellin345) protein is 3-isopropylmalate dehydratase small subunit.